The sequence spans 626 residues: Chaperone protein HtpG (626 aa).

The segment at 1 to 332 (MTNNDTPGMR…TEDLPLNVSR (332 aa)) is a; substrate-binding. Residues 333–546 (EVVQSSKVMA…KDSLDSSMEK (214 aa)) are b. The interval 547–626 (MMKMMHAEMP…ELIEAATMSR (80 aa)) is c.

This sequence belongs to the heat shock protein 90 family. Homodimer.

The protein localises to the cytoplasm. Molecular chaperone. Has ATPase activity. The polypeptide is Chaperone protein HtpG (Chlorobium phaeobacteroides (strain DSM 266 / SMG 266 / 2430)).